Reading from the N-terminus, the 395-residue chain is Renin (395 aa).

A signal peptide spans 1 to 21; sequence MLQSWEFVLLISCFLCFSSDA. Positions 22 to 43 are cleaved as a propeptide — activation peptide; sequence LQRISLKKMPSIRETLQEMGMK. A glycan (N-linked (GlcNAc...) asparagine) is linked at Asn64. Positions 79 to 392 constitute a Peptidase A1 domain; sequence YYGEISIGTP…DRQNNRIGFA (314 aa). The active site involves Asp97. 2 cysteine pairs are disulfide-bonded: Cys110–Cys117 and Cys274–Cys278. Residue Asp283 is part of the active site. The cysteines at positions 316 and 351 are disulfide-linked.

Belongs to the peptidase A1 family. N-glycosylated. In terms of tissue distribution, expressed by the venom gland (at protein level).

The protein resides in the secreted. The enzyme catalyses Cleavage of Leu-|-Xaa bond in angiotensinogen to generate angiotensin I.. Its activity is regulated as follows. Inhibited completely by aspartyl protease inhibitor pepstatin A, but not by the serine- or metalloproteinase inhibitors PMSF or EDTA. Functionally, renin is a highly specific endopeptidase, whose only known function is to generate angiotensin I from angiotensinogen in the plasma, initiating a cascade of reactions that produce an elevation of blood pressure and increased sodium retention by the kidney. This protein is also found in snake venom and shown to specifically cleave human and porcine angiotensinogen into angiotensin I. It does not have general protease activity, no cleavage of alpha or beta casein. May be directly responsible for elevation of blood pressure in the victims of envenomation. The sequence is that of Renin from Echis ocellatus (Ocellated saw-scaled viper).